Here is a 134-residue protein sequence, read N- to C-terminus: ATP synthase epsilon chain, chloroplastic (134 aa).

Belongs to the ATPase epsilon chain family. As to quaternary structure, F-type ATPases have 2 components, CF(1) - the catalytic core - and CF(0) - the membrane proton channel. CF(1) has five subunits: alpha(3), beta(3), gamma(1), delta(1), epsilon(1). CF(0) has three main subunits: a, b and c.

It is found in the plastid. The protein localises to the chloroplast thylakoid membrane. Functionally, produces ATP from ADP in the presence of a proton gradient across the membrane. The protein is ATP synthase epsilon chain, chloroplastic of Phalaenopsis aphrodite subsp. formosana (Moth orchid).